The chain runs to 463 residues: A-type ATP synthase subunit B (463 aa).

The protein belongs to the ATPase alpha/beta chains family. In terms of assembly, has multiple subunits with at least A(3), B(3), C, D, E, F, H, I and proteolipid K(x).

It localises to the cell membrane. Component of the A-type ATP synthase that produces ATP from ADP in the presence of a proton gradient across the membrane. The B chain is a regulatory subunit. The sequence is that of A-type ATP synthase subunit B from Thermococcus sp. (strain KI).